Consider the following 233-residue polypeptide: Cysteine-rich venom protein (233 aa).

Residues Pro-1 to Gly-12 form the signal peptide. The region spanning Val-31 to Tyr-159 is the SCP domain. 8 cysteine pairs are disulfide-bonded: Cys-68–Cys-146, Cys-85–Cys-160, Cys-141–Cys-157, Cys-179–Cys-186, Cys-182–Cys-191, Cys-195–Cys-228, Cys-204–Cys-222, and Cys-213–Cys-226. The ShKT domain maps to Cys-195–Cys-228.

Belongs to the CRISP family. As to expression, expressed by the venom gland.

It localises to the secreted. Its function is as follows. Blocks contraction of smooth muscle elicited by high potassium-induced depolarization, but does not block caffeine-stimulated contraction. May target voltage-gated calcium channels on smooth muscle. The protein is Cysteine-rich venom protein of Trimeresurus stejnegeri (Chinese green tree viper).